Here is a 436-residue protein sequence, read N- to C-terminus: UPF0597 protein YhaM (436 aa).

This sequence belongs to the UPF0597 family.

This is UPF0597 protein YhaM from Shigella boydii serotype 4 (strain Sb227).